The chain runs to 71 residues: Long neurotoxin 1 (71 aa).

Disulfide bonds link C3/C20, C14/C41, C26/C30, C45/C56, and C57/C62.

Belongs to the three-finger toxin family. Long-chain subfamily. Type II alpha-neurotoxin sub-subfamily. As to expression, expressed by the venom gland.

It localises to the secreted. In terms of biological role, binds with high affinity to muscular (alpha-1/CHRNA1) and neuronal (alpha-7/CHRNA7) nicotinic acetylcholine receptor (nAChR) and inhibits acetylcholine from binding to the receptor, thereby impairing neuromuscular and neuronal transmission. This Naja naja (Indian cobra) protein is Long neurotoxin 1.